A 342-amino-acid polypeptide reads, in one-letter code: Histidinol-phosphate aminotransferase 2 (342 aa).

Lys206 is modified (N6-(pyridoxal phosphate)lysine).

This sequence belongs to the class-II pyridoxal-phosphate-dependent aminotransferase family. Histidinol-phosphate aminotransferase subfamily. It depends on pyridoxal 5'-phosphate as a cofactor.

The enzyme catalyses L-histidinol phosphate + 2-oxoglutarate = 3-(imidazol-4-yl)-2-oxopropyl phosphate + L-glutamate. It functions in the pathway amino-acid biosynthesis; L-histidine biosynthesis; L-histidine from 5-phospho-alpha-D-ribose 1-diphosphate: step 7/9. The chain is Histidinol-phosphate aminotransferase 2 (hisC2) from Archaeoglobus fulgidus (strain ATCC 49558 / DSM 4304 / JCM 9628 / NBRC 100126 / VC-16).